The primary structure comprises 366 residues: Methylthioribose-1-phosphate isomerase (366 aa).

Residue D260 is the Proton donor of the active site.

It belongs to the eIF-2B alpha/beta/delta subunits family. MtnA subfamily.

Its subcellular location is the cytoplasm. The protein localises to the nucleus. The catalysed reaction is 5-(methylsulfanyl)-alpha-D-ribose 1-phosphate = 5-(methylsulfanyl)-D-ribulose 1-phosphate. Its pathway is amino-acid biosynthesis; L-methionine biosynthesis via salvage pathway; L-methionine from S-methyl-5-thio-alpha-D-ribose 1-phosphate: step 1/6. Its function is as follows. Catalyzes the interconversion of methylthioribose-1-phosphate (MTR-1-P) into methylthioribulose-1-phosphate (MTRu-1-P). The protein is Methylthioribose-1-phosphate isomerase of Caenorhabditis briggsae.